A 262-amino-acid chain; its full sequence is MSAPCHCSAPKANIPALDDKYLSDDPAHPANLICELCRLFYDNNWVTGTGGGISIRDVKGENPNLVYIAPSGIQKERLQPWEMFVVDLNGEKLLRTPNECPQELTKSYKYKPSACTPLFMSCYTMREAGACIHTHSQSAVMCTLLWGDKVEFEISHIEQIKALPQLKLNESTSKIEKVGSMQYYDKLVIPIIENTPHEEDLTDSLQEAIRNYPGTTAVLVRRHGIYVWGEDVWKAKVYNEALDYLLELAVKMKTAGMDTVRK.

A substrate-binding site is contributed by Cys115. Zn(2+)-binding residues include His133 and His135. Residue Glu158 is the Proton donor/acceptor of the active site. Residue His223 coordinates Zn(2+).

Belongs to the aldolase class II family. MtnB subfamily. The cofactor is Zn(2+).

It is found in the cytoplasm. The enzyme catalyses 5-(methylsulfanyl)-D-ribulose 1-phosphate = 5-methylsulfanyl-2,3-dioxopentyl phosphate + H2O. The protein operates within amino-acid biosynthesis; L-methionine biosynthesis via salvage pathway; L-methionine from S-methyl-5-thio-alpha-D-ribose 1-phosphate: step 2/6. Functionally, catalyzes the dehydration of methylthioribulose-1-phosphate (MTRu-1-P) into 2,3-diketo-5-methylthiopentyl-1-phosphate (DK-MTP-1-P). In Meyerozyma guilliermondii (strain ATCC 6260 / CBS 566 / DSM 6381 / JCM 1539 / NBRC 10279 / NRRL Y-324) (Yeast), this protein is Methylthioribulose-1-phosphate dehydratase.